The chain runs to 328 residues: Glucokinase (328 aa).

An ATP-binding site is contributed by 16 to 21 (ADIGGT).

The protein belongs to the bacterial glucokinase family.

The protein localises to the cytoplasm. It carries out the reaction D-glucose + ATP = D-glucose 6-phosphate + ADP + H(+). The protein is Glucokinase of Neisseria meningitidis serogroup C (strain 053442).